The following is a 590-amino-acid chain: Shugoshin (590 aa).

The disordered stretch occupies residues 1 to 20 (MPKRKIAPNKESSRRTVSHD). Residues 11 to 20 (ESSRRTVSHD) show a composition bias toward basic and acidic residues. Positions 25-86 (QIQEFQNLMD…QENVTLRSKT (62 aa)) form a coiled coil. 3 disordered regions span residues 133–235 (LRTM…QVEE), 291–337 (PSNP…HSMK), and 411–550 (RNRE…NSNI). Residues 173–185 (SFNKDDGPDLEPK) are compositionally biased toward basic and acidic residues. A compositionally biased stretch (low complexity) spans 302 to 326 (PSATLPTTTSDASTVYPSSSSSTNS). Over residues 328 to 337 (PKTKIKHSMK) the composition is skewed to basic residues. The segment covering 448–459 (KKTEDEIHEDTA) has biased composition (basic and acidic residues). Polar residues predominate over residues 513–526 (IVNNLSDENSTTRP). The span at 527-550 (SKSSKGTSNNNNNYNNFDNNNSNI) shows a compositional bias: low complexity.

It belongs to the shugoshin family. Post-translationally, ubiquitinated by the anaphase promoting complex (APC) at the onset of anaphase, conducting to its degradation.

It is found in the chromosome. Its subcellular location is the centromere. It localises to the kinetochore. The protein localises to the cytoplasm. The protein resides in the cytoskeleton. It is found in the spindle pole. In terms of biological role, plays a central role in chromosome cohesion during mitosis and meiosis divisions by preventing premature dissociation of cohesin complex from centromeres after prophase, when most of cohesin complex dissociates from chromosomes arms. Probably act by protecting REC8 and RAD21 from separase degradation during anaphase. Also acts as a spindle checkpoint component required for sensing tension between sister chromatids during mitosis, its degradation when they separate preventing cell cycle arrest and chromosome loss in anaphase, a time when sister chromatids are no longer under tension. The polypeptide is Shugoshin (SGO1) (Saccharomyces cerevisiae (strain ATCC 204508 / S288c) (Baker's yeast)).